The sequence spans 350 residues: Ribonuclease H2 subunit B (350 aa).

Over residues Gln134–Lys151 the composition is skewed to polar residues. Positions Gln134–Asn153 are disordered.

It belongs to the RNase H2 subunit B family. Highly divergent. As to quaternary structure, the RNase 2 complex is a heterotrimer composed of the catalytic subunit RNH201 and of the non-catalytic subunits RNH202 and RNH203.

It localises to the nucleus. Its function is as follows. Non catalytic subunit of RNase H2, an endonuclease that specifically degrades the RNA of RNA:DNA hybrids. Participates in DNA replication, possibly by mediating the removal of lagging-strand Okazaki fragment RNA primers during DNA replication. Mediates the excision of single ribonucleotides from DNA:RNA duplexes. This chain is Ribonuclease H2 subunit B (RNH202), found in Saccharomyces cerevisiae (strain ATCC 204508 / S288c) (Baker's yeast).